Reading from the N-terminus, the 751-residue chain is Probable alpha-galactosidase C (751 aa).

The N-terminal stretch at 1 to 27 (MFGSPKRAALAAASLLAIFGNGPSVMA) is a signal peptide. Residues Asn-49, Asn-57, Asn-162, Asn-186, Asn-194, Asn-366, Asn-433, Asn-452, and Asn-500 are each glycosylated (N-linked (GlcNAc...) asparagine). Asp-510 functions as the Nucleophile in the catalytic mechanism. Asp-572 acts as the Proton donor in catalysis. Residue Asn-720 is glycosylated (N-linked (GlcNAc...) asparagine).

It belongs to the glycosyl hydrolase 36 family. Homotetramer. It depends on Mg(2+) as a cofactor. Requires NAD(+) as cofactor.

It localises to the secreted. The catalysed reaction is Hydrolysis of terminal, non-reducing alpha-D-galactose residues in alpha-D-galactosides, including galactose oligosaccharides, galactomannans and galactolipids.. Its function is as follows. Hydrolyzes a variety of simple alpha-D-galactoside as well as more complex molecules such as oligosaccharides and polysaccharides. This is Probable alpha-galactosidase C (aglC) from Aspergillus flavus (strain ATCC 200026 / FGSC A1120 / IAM 13836 / NRRL 3357 / JCM 12722 / SRRC 167).